The sequence spans 359 residues: Gap junction alpha-5 protein (359 aa).

Over 1–19 the chain is Cytoplasmic; the sequence is MGDWSFLGEFLEEVHKHST. Residues 20–40 form a helical membrane-spanning segment; the sequence is VIGKVWLTVLFIFRMLVLGTA. At 41-76 the chain is on the extracellular side; it reads AESSWGDEQADFLCDTMQPGCENVCYDQAFPISHIR. A helical transmembrane segment spans residues 77 to 97; the sequence is YWVLQVIFVSTPSLVYLGHAV. At 98–165 the chain is on the cytoplasmic side; sequence HMVRVQEKRK…CSILIRTTME (68 aa). Residues 166–186 form a helical membrane-spanning segment; the sequence is VAFIVGQYLLYGVFLDTLHVC. Over 187 to 206 the chain is Extracellular; that stretch reads RRSPCPHPVNCYVSRPTEKN. A helical membrane pass occupies residues 207–227; that stretch reads VFIVFMLAVAGLSLFLSLAEL. Over 228 to 359 the chain is Cytoplasmic; that stretch reads YHLGWKKIRQ…SKARSDDLSV (132 aa). Disordered regions lie at residues 285-305 and 317-359; these read SNKMASQQNTDNLSTEQVRSQ and RYAQ…DLSV. Serine 354 and serine 358 each carry phosphoserine.

Belongs to the connexin family. Alpha-type (group II) subfamily. As to quaternary structure, a connexon is composed of a hexamer of connexins.

The protein resides in the cell membrane. It is found in the cell junction. Its subcellular location is the gap junction. Functionally, one gap junction consists of a cluster of closely packed pairs of transmembrane channels, the connexons, through which materials of low MW diffuse from one cell to a neighboring cell. The chain is Gap junction alpha-5 protein (GJA5) from Bos taurus (Bovine).